We begin with the raw amino-acid sequence, 105 residues long: Heat shock protein HspQ (105 aa).

The tract at residues 80-105 (AHPEQPSLDELAASIRHQLQAPHLRN) is disordered.

It belongs to the HspQ family.

It is found in the cytoplasm. Functionally, involved in the degradation of certain denaturated proteins, including DnaA, during heat shock stress. The protein is Heat shock protein HspQ of Yersinia pseudotuberculosis serotype O:1b (strain IP 31758).